The sequence spans 408 residues: MKSVQEQMAIIRRGAVEILVESELEAKLKKSVETGVPLKVKAGFDPTAPDLHVGHTVLIQKLKQFQDLGHEVNFLIGDFTGMIGDPTGKNETRKALTREEVLKNAETYKQQVFKILDPERTKVVFNSSWMGQMSAADLIGLAGRYTVARMLERDDFHKRFSGQQPIAIHEFLYPLVQGYDSVALKADVELGGTDQKFNLLVGRELQKQEGQVPQCVLTMPLLEGLDGVNKMSKSLGNYIGITEPAKEVFGKVMSISDELMLRYYELLSDVDLAQLQLVRDGVEGKAGGAHPMESKKSLARELVARFYDQAAALRAEEEFVQQFKQKEVPDDIPEVLIDAGEPVWICRLLTDAGLTASNGEARRLVKQGAVKLGGEKIADAGLEVAPAGELILQAGKRRFARIKFLEKK.

The 'HIGH' region motif lies at 46-55 (PTAPDLHVGH). Residues 230-234 (KMSKS) carry the 'KMSKS' region motif. Lysine 233 provides a ligand contact to ATP. Residues 343 to 404 (VWICRLLTDA…GKRRFARIKF (62 aa)) form the S4 RNA-binding domain.

Belongs to the class-I aminoacyl-tRNA synthetase family. TyrS type 2 subfamily. As to quaternary structure, homodimer.

It localises to the cytoplasm. It catalyses the reaction tRNA(Tyr) + L-tyrosine + ATP = L-tyrosyl-tRNA(Tyr) + AMP + diphosphate + H(+). Catalyzes the attachment of tyrosine to tRNA(Tyr) in a two-step reaction: tyrosine is first activated by ATP to form Tyr-AMP and then transferred to the acceptor end of tRNA(Tyr). This chain is Tyrosine--tRNA ligase, found in Syntrophotalea carbinolica (strain DSM 2380 / NBRC 103641 / GraBd1) (Pelobacter carbinolicus).